The primary structure comprises 462 residues: GTPase Der (462 aa).

2 EngA-type G domains span residues 2–164 (KKIA…PKKE) and 195–366 (INVA…KNYS). Residues 8 to 15 (GKPNVGKS), 55 to 59 (DTGGI), 116 to 119 (NKID), 201 to 208 (GRVNVGKS), 248 to 252 (DTAGI), and 312 to 315 (NKWD) each bind GTP. One can recognise a KH-like domain in the interval 367-451 (TWLPTGQLNR…PIILRPRKRG (85 aa)).

The protein belongs to the TRAFAC class TrmE-Era-EngA-EngB-Septin-like GTPase superfamily. EngA (Der) GTPase family. Associates with the 50S ribosomal subunit.

Its function is as follows. GTPase that plays an essential role in the late steps of ribosome biogenesis. The protein is GTPase Der of Nitratiruptor sp. (strain SB155-2).